Reading from the N-terminus, the 249-residue chain is DNA polymerase sliding clamp 3 (249 aa).

This sequence belongs to the PCNA family. As to quaternary structure, homotrimer. The subunits circularize to form a toroid; DNA passes through its center. Replication factor C (RFC) is required to load the toroid on the DNA.

In terms of biological role, sliding clamp subunit that acts as a moving platform for DNA processing. Responsible for tethering the catalytic subunit of DNA polymerase and other proteins to DNA during high-speed replication. The sequence is that of DNA polymerase sliding clamp 3 from Aeropyrum pernix (strain ATCC 700893 / DSM 11879 / JCM 9820 / NBRC 100138 / K1).